We begin with the raw amino-acid sequence, 330 residues long: uncharacterized protein (330 aa).

Residues 96-256 enclose the JmjC domain; sequence AALEFDFTDL…LMLAALRKKL (161 aa). Positions 145, 147, and 224 each coordinate Fe cation.

Belongs to the ROX family. Fe(2+) serves as cofactor.

This is an uncharacterized protein from Bacillus subtilis (strain 168).